The chain runs to 393 residues: NAD(P)H-quinone oxidoreductase subunit H, chloroplastic (393 aa).

It belongs to the complex I 49 kDa subunit family. As to quaternary structure, NDH is composed of at least 16 different subunits, 5 of which are encoded in the nucleus.

It localises to the plastid. Its subcellular location is the chloroplast thylakoid membrane. The enzyme catalyses a plastoquinone + NADH + (n+1) H(+)(in) = a plastoquinol + NAD(+) + n H(+)(out). It carries out the reaction a plastoquinone + NADPH + (n+1) H(+)(in) = a plastoquinol + NADP(+) + n H(+)(out). NDH shuttles electrons from NAD(P)H:plastoquinone, via FMN and iron-sulfur (Fe-S) centers, to quinones in the photosynthetic chain and possibly in a chloroplast respiratory chain. The immediate electron acceptor for the enzyme in this species is believed to be plastoquinone. Couples the redox reaction to proton translocation, and thus conserves the redox energy in a proton gradient. This Eucalyptus globulus subsp. globulus (Tasmanian blue gum) protein is NAD(P)H-quinone oxidoreductase subunit H, chloroplastic.